Here is a 701-residue protein sequence, read N- to C-terminus: Elongation factor G (701 aa).

The region spanning 8-290 is the tr-type G domain; sequence KHYRNIGISA…AVIEYLPAPI (283 aa). Residues 17–24, 88–92, and 142–145 each bind GTP; these read AHIDAGKT, DTPGH, and NKMD.

This sequence belongs to the TRAFAC class translation factor GTPase superfamily. Classic translation factor GTPase family. EF-G/EF-2 subfamily.

It localises to the cytoplasm. In terms of biological role, catalyzes the GTP-dependent ribosomal translocation step during translation elongation. During this step, the ribosome changes from the pre-translocational (PRE) to the post-translocational (POST) state as the newly formed A-site-bound peptidyl-tRNA and P-site-bound deacylated tRNA move to the P and E sites, respectively. Catalyzes the coordinated movement of the two tRNA molecules, the mRNA and conformational changes in the ribosome. This chain is Elongation factor G, found in Hamiltonella defensa subsp. Acyrthosiphon pisum (strain 5AT).